Reading from the N-terminus, the 155-residue chain is Nucleosome assembly protein 1-like 5 (155 aa).

A compositionally biased stretch (basic and acidic residues) spans 1 to 16 (MADPEKQGPAESRAED). The tract at residues 1–60 (MADPEKQGPAESRAEDEVMEGAQGGEDAATGDSATAPAAEEPQAPAENAPKPKNDFIESL) is disordered. The span at 27 to 49 (DAATGDSATAPAAEEPQAPAENA) shows a compositional bias: low complexity. Residues 68-94 (VLALKKLQKRCDKIEAKFDKEFQALEK) adopt a coiled-coil conformation. The interval 119–155 (WTLEGEDDEDDEEEEDEEEEEEEAAAGATGGPDSAEK) is disordered. Positions 122–142 (EGEDDEDDEEEEDEEEEEEEA) are enriched in acidic residues.

The protein belongs to the nucleosome assembly protein (NAP) family.

The protein resides in the nucleus. The protein is Nucleosome assembly protein 1-like 5 (Nap1l5) of Rattus norvegicus (Rat).